The chain runs to 499 residues: Probable alkaline/neutral invertase F (499 aa).

S11 carries the post-translational modification Phosphoserine. T20 carries the post-translational modification Phosphothreonine. S497 bears the Phosphoserine mark.

This sequence belongs to the glycosyl hydrolase 100 family.

The catalysed reaction is Hydrolysis of terminal non-reducing beta-D-fructofuranoside residues in beta-D-fructofuranosides.. Its function is as follows. Invertase that cleaves sucrose into glucose and fructose. The sequence is that of Probable alkaline/neutral invertase F from Arabidopsis thaliana (Mouse-ear cress).